A 289-amino-acid chain; its full sequence is BTB/POZ domain-containing protein KCTD7 (289 aa).

The disordered stretch occupies residues 1–42 (MVVVNGREPDSRHSDGAMSSSEAEDDFLEPATPTATQAGHGL). Residues 53 to 141 (VPLNIGGAHF…YAIGPLLEQL (89 aa)) form the BTB domain.

As to quaternary structure, interacts with CUL3.

The protein resides in the cell membrane. It localises to the cytoplasm. Its subcellular location is the cytosol. Functionally, may be involved in the control of excitability of cortical neurons. The polypeptide is BTB/POZ domain-containing protein KCTD7 (Kctd7) (Rattus norvegicus (Rat)).